The primary structure comprises 816 residues: Auxin response factor 12 (816 aa).

A compositionally biased stretch (low complexity) spans 1 to 10; the sequence is MSSSSAASIG. Residues 1-24 are disordered; that stretch reads MSSSSAASIGPPQPPPPPAPPEEE. Pro residues predominate over residues 11–20; it reads PPQPPPPPAP. A DNA-binding region (TF-B3) is located at residues 135–237; the sequence is FCKTLTASDT…QLLLGIRRAS (103 aa). The segment at 526–565 is disordered; it reads NDQKQKIQPDQSYQVPTSAVLPSPTSLPSHLREKFGFSDP. One can recognise a PB1 domain in the interval 717 to 801; it reads RTFVKVYKSG…WYIKILSPED (85 aa).

This sequence belongs to the ARF family. In terms of assembly, homodimers and heterodimers.

Its subcellular location is the nucleus. Its function is as follows. Auxin response factors (ARFs) are transcriptional factors that bind specifically to the DNA sequence 5'-TGTCTC-3' found in the auxin-responsive promoter elements (AuxREs). This chain is Auxin response factor 12 (ARF12), found in Oryza sativa subsp. indica (Rice).